Consider the following 413-residue polypeptide: Serine hydroxymethyltransferase (413 aa).

(6S)-5,6,7,8-tetrahydrofolate-binding positions include leucine 117 and 121–123; that span reads GHL. Position 226 is an N6-(pyridoxal phosphate)lysine (lysine 226). Position 349-351 (349-351) interacts with (6S)-5,6,7,8-tetrahydrofolate; it reads SPF.

The protein belongs to the SHMT family. In terms of assembly, homodimer. Requires pyridoxal 5'-phosphate as cofactor.

Its subcellular location is the cytoplasm. The catalysed reaction is (6R)-5,10-methylene-5,6,7,8-tetrahydrofolate + glycine + H2O = (6S)-5,6,7,8-tetrahydrofolate + L-serine. It participates in one-carbon metabolism; tetrahydrofolate interconversion. Its pathway is amino-acid biosynthesis; glycine biosynthesis; glycine from L-serine: step 1/1. Catalyzes the reversible interconversion of serine and glycine with tetrahydrofolate (THF) serving as the one-carbon carrier. This reaction serves as the major source of one-carbon groups required for the biosynthesis of purines, thymidylate, methionine, and other important biomolecules. Also exhibits THF-independent aldolase activity toward beta-hydroxyamino acids, producing glycine and aldehydes, via a retro-aldol mechanism. This Pelobacter propionicus (strain DSM 2379 / NBRC 103807 / OttBd1) protein is Serine hydroxymethyltransferase.